Reading from the N-terminus, the 448-residue chain is Tubulin alpha chain (448 aa).

GTP-binding residues include Q12, E73, S142, G146, T147, T181, N208, and N230. Mg(2+) is bound at residue E73. E256 is a catalytic residue.

The protein belongs to the tubulin family. Dimer of alpha and beta chains. A typical microtubule is a hollow water-filled tube with an outer diameter of 25 nm and an inner diameter of 15 nM. Alpha-beta heterodimers associate head-to-tail to form protofilaments running lengthwise along the microtubule wall with the beta-tubulin subunit facing the microtubule plus end conferring a structural polarity. Microtubules usually have 13 protofilaments but different protofilament numbers can be found in some organisms and specialized cells. Mg(2+) serves as cofactor.

Its subcellular location is the cytoplasm. The protein resides in the cytoskeleton. It carries out the reaction GTP + H2O = GDP + phosphate + H(+). Its function is as follows. Tubulin is the major constituent of microtubules, a cylinder consisting of laterally associated linear protofilaments composed of alpha- and beta-tubulin heterodimers. Microtubules grow by the addition of GTP-tubulin dimers to the microtubule end, where a stabilizing cap forms. Below the cap, tubulin dimers are in GDP-bound state, owing to GTPase activity of alpha-tubulin. The protein is Tubulin alpha chain (TUB1) of Eremothecium gossypii (strain ATCC 10895 / CBS 109.51 / FGSC 9923 / NRRL Y-1056) (Yeast).